We begin with the raw amino-acid sequence, 593 residues long: NADH-quinone oxidoreductase subunit C/D (593 aa).

Residues 1 to 184 (MTADTAVSIP…DPFSLTLAKQ (184 aa)) are NADH dehydrogenase I subunit C. Residues 208-593 (DYMFLNLGPN…IDFVMADVDR (386 aa)) are NADH dehydrogenase I subunit D.

It in the N-terminal section; belongs to the complex I 30 kDa subunit family. This sequence in the C-terminal section; belongs to the complex I 49 kDa subunit family. In terms of assembly, NDH-1 is composed of 13 different subunits. Subunits NuoB, CD, E, F, and G constitute the peripheral sector of the complex.

The protein resides in the cell inner membrane. The catalysed reaction is a quinone + NADH + 5 H(+)(in) = a quinol + NAD(+) + 4 H(+)(out). Functionally, NDH-1 shuttles electrons from NADH, via FMN and iron-sulfur (Fe-S) centers, to quinones in the respiratory chain. The immediate electron acceptor for the enzyme in this species is believed to be ubiquinone. Couples the redox reaction to proton translocation (for every two electrons transferred, four hydrogen ions are translocated across the cytoplasmic membrane), and thus conserves the redox energy in a proton gradient. The polypeptide is NADH-quinone oxidoreductase subunit C/D (Ectopseudomonas mendocina (strain ymp) (Pseudomonas mendocina)).